The following is an 859-amino-acid chain: Photoactivated adenylate cyclase subunit beta-like protein FB (859 aa).

Residues 56–149 form the BLUF 1 domain; the sequence is LRRLMYLSKS…GRMYGDWHMK (94 aa). The Guanylate cyclase 1 domain occupies 205–333; the sequence is VVTFIYLVEF…DCINTTSRIA (129 aa). Residues 414–449 form a disordered region; it reads GLPNSQRPPIFDDTPKANRRPRTPGYGGRQRSDSQV. Residues 471–563 form the BLUF 2 domain; the sequence is LTTLTYISQA…RVYPSEWTLT (93 aa). Residues 619–748 enclose the Guanylate cyclase 2 domain; that stretch reads VMLATDICSF…AVSARVMEVE (130 aa). A disordered region spans residues 813–859; the sequence is AARSGEKPLTEPEAAKPDFRVSPGRVRHGDSGRRSNSAQGKRSIQVR. The segment covering 815–831 has biased composition (basic and acidic residues); that stretch reads RSGEKPLTEPEAAKPDF. A compositionally biased stretch (polar residues) spans 846 to 859; sequence RSNSAQGKRSIQVR.

Belongs to the adenylyl cyclase class-4/guanylyl cyclase family. Heterotetramer of two alpha and two beta subunits.

It localises to the cell projection. The protein resides in the cilium. The protein localises to the flagellum. This Euglena gracilis protein is Photoactivated adenylate cyclase subunit beta-like protein FB.